The sequence spans 552 residues: Leucine-rich repeat-containing protein 56 (552 aa).

5 LRR repeats span residues 94 to 115 (NLIQLKLNHSYLGSLRDLGTSL), 117 to 138 (HLQVLWLARCGLTDLDGIGSFL), 139 to 160 (ELKELYVSYNNISDLSPLCLLE), 161 to 182 (QLEVLDLEGNNVEDLGQMRYLQ), and 186 to 206 (RLAMLTLEGNLVCLKPDPGPS). Disordered stretches follow at residues 348–375 (APLEQMPPHRPDLAIRPSTPRPDPAESC) and 401–435 (QQERSAQVQAQDPQKDPVEQEDQTGPKTSLTPPRL).

Belongs to the LRRC56 family. In terms of assembly, interacts with IFT88.

The protein localises to the cell projection. The protein resides in the cilium. Functionally, required for the assembly of dynein arms. The polypeptide is Leucine-rich repeat-containing protein 56 (Lrrc56) (Mus musculus (Mouse)).